Reading from the N-terminus, the 580-residue chain is Lysine--tRNA ligase (580 aa).

Positions 43 to 51 match the 'HIGH' region motif; that stretch reads PSGPIHLGN. The interval 178 to 209 is disordered; the sequence is KAPAKKSQKPLDEAELEAAEGSGAAAEDDGSS. Positions 196–209 are enriched in low complexity; it reads AEGSGAAAEDDGSS. The 'KMSKS' region motif lies at 325–329; it reads KMSSS.

This sequence belongs to the class-I aminoacyl-tRNA synthetase family.

The protein localises to the cytoplasm. The enzyme catalyses tRNA(Lys) + L-lysine + ATP = L-lysyl-tRNA(Lys) + AMP + diphosphate. The polypeptide is Lysine--tRNA ligase (lysS) (Streptomyces coelicolor (strain ATCC BAA-471 / A3(2) / M145)).